Here is a 214-residue protein sequence, read N- to C-terminus: Outer-membrane lipoprotein LolB (214 aa).

The N-terminal stretch at 1–25 (MNNLKRLTKTIFSCFTLSALLLLAG) is a signal peptide. A lipid anchor (N-palmitoyl cysteine) is attached at Cys26. Cys26 carries S-diacylglycerol cysteine lipidation.

Belongs to the LolB family. As to quaternary structure, monomer.

It localises to the cell outer membrane. In terms of biological role, plays a critical role in the incorporation of lipoproteins in the outer membrane after they are released by the LolA protein. The sequence is that of Outer-membrane lipoprotein LolB from Shewanella baltica (strain OS155 / ATCC BAA-1091).